We begin with the raw amino-acid sequence, 476 residues long: Sulfate adenylyltransferase subunit 1 (476 aa).

The tr-type G domain maps to 24 to 228; it reads KSLLRFLTCG…MAWYQGPTLL (205 aa). The segment at 33 to 40 is G1; it reads GSVDDGKS. Residue 33-40 participates in GTP binding; it reads GSVDDGKS. The interval 91–95 is G2; it reads GITID. Residues 112 to 115 are G3; that stretch reads DTPG. GTP is bound by residues 112-116 and 167-170; these read DTPGH and NKMD. The tract at residues 167–170 is G4; the sequence is NKMD. Residues 205 to 207 form a G5 region; sequence SAL.

The protein belongs to the TRAFAC class translation factor GTPase superfamily. Classic translation factor GTPase family. CysN/NodQ subfamily. Heterodimer composed of CysD, the smaller subunit, and CysN.

It catalyses the reaction sulfate + ATP + H(+) = adenosine 5'-phosphosulfate + diphosphate. It participates in sulfur metabolism; hydrogen sulfide biosynthesis; sulfite from sulfate: step 1/3. Its function is as follows. With CysD forms the ATP sulfurylase (ATPS) that catalyzes the adenylation of sulfate producing adenosine 5'-phosphosulfate (APS) and diphosphate, the first enzymatic step in sulfur assimilation pathway. APS synthesis involves the formation of a high-energy phosphoric-sulfuric acid anhydride bond driven by GTP hydrolysis by CysN coupled to ATP hydrolysis by CysD. The chain is Sulfate adenylyltransferase subunit 1 from Vibrio vulnificus (strain CMCP6).